A 1147-amino-acid chain; its full sequence is Protein lin-41 (1147 aa).

The segment at 1-93 (MATIVPCSLE…PPSMIQSPQQ (93 aa)) is disordered. The span at 33–47 (SGNELSMGGSSSEGD) shows a compositional bias: low complexity. Basic and acidic residues predominate over residues 48–65 (SMSHHRGEHSPNHHHQDN). The segment covering 84–93 (PPSMIQSPQQ) has biased composition (low complexity). Residues 114 to 155 (CSVCSKSSTIGVLPFVCAHKTCQSCYQMTPSSYDRRACKLCG) form an RING-type zinc finger. Residues 366 to 412 (MGPIQCQGCESKISFAYCMQCQEALCIHCVQAHQRVRATKQHAFVEL) form a B box-type; atypical zinc finger. Zn(2+)-binding residues include cysteine 371, cysteine 374, cysteine 394, and histidine 398. Residues 565-618 (AFDTHVNALEERRKELLKRVETVKNLKLSVLISQAESLQSKQIDLQQAIQTATK) adopt a coiled-coil conformation. Residues 723 to 817 (ACGDLLSSSI…ISGCPTTMDI (95 aa)) form a Filamin repeat. NHL repeat units lie at residues 832-875 (ILTF…FDKD), 879-922 (ISKF…FDEN), 926-969 (LLKF…FTPQ), 974-1017 (RKCG…LSPR), 1022-1065 (MKVY…FASD), and 1107-1147 (SAPT…IRVF). A disordered region spans residues 1104–1123 (AFSSAPTPLTPSPRQLLDRP).

It belongs to the TRIM/RBCC family.

It localises to the cytoplasm. It is found in the P-body. Its function is as follows. Heterochronic protein which acts downstream of let-7 in temporal patterning. Plays a role in the developmental timing of postembryonic hypodermal seam cell division and fusion events and adult alae production. Represses lin-29 during late larval stages, which prevents terminal differentiation of hypodermal seam cells and promotes their division. Involved in post-transcriptional gene regulation, uses two independent pathways. Has direct and specific RNA-binding activity and, depending on the location (5'UTR or 3'UTR) of the target site, triggers either mRNA decay or repression of translation. Degrades the mRNA of transcription factor dmd-3 to govern the timing and extent of male tail tip morphogenesis. Plays a role in the sexual maturation of the nervous system. The sequence is that of Protein lin-41 from Caenorhabditis elegans.